Reading from the N-terminus, the 491-residue chain is Fatty acyl-CoA reductase 1 (491 aa).

Belongs to the fatty acyl-CoA reductase family. As to expression, expressed in the endodermal cell layer surrounding the central vasculature in roots. Expressed in the hilum region of seeds. Expressed in lateral root tips, cotyledons, the shoot apex, young leaves, petals, stamen filaments, and receptacle of siliques.

The enzyme catalyses a long-chain fatty acyl-CoA + 2 NADPH + 2 H(+) = a long-chain primary fatty alcohol + 2 NADP(+) + CoA. Its function is as follows. Catalyzes the reduction of fatty acyl-CoA to fatty alcohols. Catalyzes specifically the formation of C18:0 and C22:0 fatty alcohols. Provides the fatty alcohols required for synthesis of suberin in roots, seed coat and wound-induced leaf tissue. Provides the fatty alcohols required for synthesis of alkyl hydroxycinnamates in root waxes. The protein is Fatty acyl-CoA reductase 1 of Arabidopsis thaliana (Mouse-ear cress).